A 102-amino-acid polypeptide reads, in one-letter code: NADH-quinone oxidoreductase subunit K (102 aa).

The next 3 membrane-spanning stretches (helical) occupy residues 6–26 (ATHF…GVLT), 31–51 (LVIF…LIGF), and 62–82 (VFAL…LGIV).

The protein belongs to the complex I subunit 4L family. As to quaternary structure, NDH-1 is composed of 14 different subunits. Subunits NuoA, H, J, K, L, M, N constitute the membrane sector of the complex.

It localises to the cell membrane. The enzyme catalyses a quinone + NADH + 5 H(+)(in) = a quinol + NAD(+) + 4 H(+)(out). NDH-1 shuttles electrons from NADH, via FMN and iron-sulfur (Fe-S) centers, to quinones in the respiratory chain. The immediate electron acceptor for the enzyme in this species is believed to be ubiquinone. Couples the redox reaction to proton translocation (for every two electrons transferred, four hydrogen ions are translocated across the cytoplasmic membrane), and thus conserves the redox energy in a proton gradient. This Thermomicrobium roseum (strain ATCC 27502 / DSM 5159 / P-2) protein is NADH-quinone oxidoreductase subunit K.